The sequence spans 298 residues: Transcription factor BOA (298 aa).

Disordered regions lie at residues Met1–Ile26, Leu79–Arg143, and Glu206–Ser232. Residues Tyr10–Gly20 show a composition bias toward acidic residues. A compositionally biased stretch (basic and acidic residues) spans Asp104 to Gly113. The span at Ser122–Pro131 shows a compositional bias: acidic residues. The segment at residues Thr138 to Lys197 is a DNA-binding region (myb-like GARP). Positions Tyr209–Gln227 are enriched in polar residues.

It localises to the nucleus. Transcription factor that is a critical component of the regulatory circuit of the circadian clock. Binds to specific sites on CCA1 promoter leading to CCA1 activation. Is required for the rhythmic expression of other clock genes such as LHY, GI and APRR1/TOC1. This Arabidopsis thaliana (Mouse-ear cress) protein is Transcription factor BOA (BOA).